The sequence spans 511 residues: Protein phosphatase 2C 7 (511 aa).

The N-terminal stretch at 1–19 (MEEISPAVALTLGLANTMC) is a signal peptide. Positions 188–501 (LWGTISICGG…DNISIIVIDL (314 aa)) constitute a PPM-type phosphatase domain. Positions 242, 243, 432, and 492 each coordinate Mn(2+).

The protein belongs to the PP2C family. Interacts with PYL13. Mg(2+) is required as a cofactor. The cofactor is Mn(2+). As to expression, expressed in seeds.

The catalysed reaction is O-phospho-L-seryl-[protein] + H2O = L-seryl-[protein] + phosphate. It carries out the reaction O-phospho-L-threonyl-[protein] + H2O = L-threonyl-[protein] + phosphate. Functionally, key component and repressor of the abscisic acid (ABA) signaling pathway that regulates numerous ABA responses, such as stomatal closure, seed germination and inhibition of vegetative growth. In Arabidopsis thaliana (Mouse-ear cress), this protein is Protein phosphatase 2C 7 (HAB2).